The primary structure comprises 87 residues: Small ribosomal subunit protein bS20 (87 aa).

The interval 1-26 is disordered; the sequence is MANIKSAKKRAIQSEKARKHNASRRS.

Belongs to the bacterial ribosomal protein bS20 family.

Its function is as follows. Binds directly to 16S ribosomal RNA. The sequence is that of Small ribosomal subunit protein bS20 from Escherichia coli O17:K52:H18 (strain UMN026 / ExPEC).